A 1377-amino-acid polypeptide reads, in one-letter code: DNA-directed RNA polymerase subunit beta'' (1377 aa).

4 residues coordinate Zn(2+): C220, C291, C298, and C301.

Belongs to the RNA polymerase beta' chain family. RpoC2 subfamily. As to quaternary structure, in plastids the minimal PEP RNA polymerase catalytic core is composed of four subunits: alpha, beta, beta', and beta''. When a (nuclear-encoded) sigma factor is associated with the core the holoenzyme is formed, which can initiate transcription. Zn(2+) serves as cofactor.

The protein localises to the plastid. Its subcellular location is the chloroplast. The enzyme catalyses RNA(n) + a ribonucleoside 5'-triphosphate = RNA(n+1) + diphosphate. DNA-dependent RNA polymerase catalyzes the transcription of DNA into RNA using the four ribonucleoside triphosphates as substrates. The chain is DNA-directed RNA polymerase subunit beta'' from Nandina domestica (Heavenly bamboo).